The chain runs to 233 residues: 2-C-methyl-D-erythritol 4-phosphate cytidylyltransferase (233 aa).

This sequence belongs to the IspD/TarI cytidylyltransferase family. IspD subfamily.

The catalysed reaction is 2-C-methyl-D-erythritol 4-phosphate + CTP + H(+) = 4-CDP-2-C-methyl-D-erythritol + diphosphate. The protein operates within isoprenoid biosynthesis; isopentenyl diphosphate biosynthesis via DXP pathway; isopentenyl diphosphate from 1-deoxy-D-xylulose 5-phosphate: step 2/6. Catalyzes the formation of 4-diphosphocytidyl-2-C-methyl-D-erythritol from CTP and 2-C-methyl-D-erythritol 4-phosphate (MEP). This chain is 2-C-methyl-D-erythritol 4-phosphate cytidylyltransferase, found in Lachnoclostridium phytofermentans (strain ATCC 700394 / DSM 18823 / ISDg) (Clostridium phytofermentans).